The sequence spans 293 residues: Ribonuclease HIII (293 aa).

The RNase H type-2 domain occupies 78–293; sequence LPLIGTDEVG…TEKAKKRLER (216 aa). Residues aspartate 84, glutamate 85, and aspartate 187 each contribute to the a divalent metal cation site.

It belongs to the RNase HII family. RnhC subfamily. It depends on Mn(2+) as a cofactor. The cofactor is Mg(2+).

It is found in the cytoplasm. It catalyses the reaction Endonucleolytic cleavage to 5'-phosphomonoester.. In terms of biological role, endonuclease that specifically degrades the RNA of RNA-DNA hybrids. The protein is Ribonuclease HIII of Streptococcus pneumoniae serotype 19F (strain G54).